The primary structure comprises 144 residues: Protein SprT-like (144 aa).

The SprT-like domain maps to 4–143; sequence NKYVQEVSLQ…GKCRGKLTLK (140 aa). His64 is a Zn(2+) binding site. Glu65 is a catalytic residue. Position 68 (His68) interacts with Zn(2+).

This sequence belongs to the SprT family. Zn(2+) is required as a cofactor.

The protein resides in the cytoplasm. This chain is Protein SprT-like, found in Streptococcus suis (strain 98HAH33).